The chain runs to 457 residues: Toxin and drug export protein A (457 aa).

The N-terminal stretch at 1-23 (MFTIKKLTLTIVVATTLTGCANI) is a signal peptide.

The protein belongs to the outer membrane factor (OMF) (TC 1.B.17) family. Homotrimer. Probably part of a complex composed of LtxB, LtxD and TdeA, which forms a single transport channel across the two membranes.

It localises to the cell outer membrane. Functionally, required for secretion of the LtxA leukotoxin and resistance to various antimicrobial compounds. The sequence is that of Toxin and drug export protein A from Aggregatibacter actinomycetemcomitans (Actinobacillus actinomycetemcomitans).